The following is a 206-amino-acid chain: Dephospho-CoA kinase (206 aa).

The DPCK domain occupies 4 to 204 (IVGLTGGIGS…QFYLQQAENK (201 aa)). An ATP-binding site is contributed by 12-17 (GSGKTT).

This sequence belongs to the CoaE family.

Its subcellular location is the cytoplasm. The catalysed reaction is 3'-dephospho-CoA + ATP = ADP + CoA + H(+). The protein operates within cofactor biosynthesis; coenzyme A biosynthesis; CoA from (R)-pantothenate: step 5/5. Functionally, catalyzes the phosphorylation of the 3'-hydroxyl group of dephosphocoenzyme A to form coenzyme A. This chain is Dephospho-CoA kinase, found in Haemophilus influenzae (strain 86-028NP).